Consider the following 292-residue polypeptide: Phosphatidylserine decarboxylase proenzyme (292 aa).

Active-site charge relay system; for autoendoproteolytic cleavage activity residues include Asp92, His149, and Ser256. Ser256 functions as the Schiff-base intermediate with substrate; via pyruvic acid; for decarboxylase activity in the catalytic mechanism. Ser256 is modified (pyruvic acid (Ser); by autocatalysis).

Belongs to the phosphatidylserine decarboxylase family. PSD-B subfamily. Prokaryotic type I sub-subfamily. As to quaternary structure, heterodimer of a large membrane-associated beta subunit and a small pyruvoyl-containing alpha subunit. Pyruvate is required as a cofactor. Is synthesized initially as an inactive proenzyme. Formation of the active enzyme involves a self-maturation process in which the active site pyruvoyl group is generated from an internal serine residue via an autocatalytic post-translational modification. Two non-identical subunits are generated from the proenzyme in this reaction, and the pyruvate is formed at the N-terminus of the alpha chain, which is derived from the carboxyl end of the proenzyme. The autoendoproteolytic cleavage occurs by a canonical serine protease mechanism, in which the side chain hydroxyl group of the serine supplies its oxygen atom to form the C-terminus of the beta chain, while the remainder of the serine residue undergoes an oxidative deamination to produce ammonia and the pyruvoyl prosthetic group on the alpha chain. During this reaction, the Ser that is part of the protease active site of the proenzyme becomes the pyruvoyl prosthetic group, which constitutes an essential element of the active site of the mature decarboxylase.

The protein localises to the cell membrane. The catalysed reaction is a 1,2-diacyl-sn-glycero-3-phospho-L-serine + H(+) = a 1,2-diacyl-sn-glycero-3-phosphoethanolamine + CO2. The protein operates within phospholipid metabolism; phosphatidylethanolamine biosynthesis; phosphatidylethanolamine from CDP-diacylglycerol: step 2/2. Its function is as follows. Catalyzes the formation of phosphatidylethanolamine (PtdEtn) from phosphatidylserine (PtdSer). The chain is Phosphatidylserine decarboxylase proenzyme from Baumannia cicadellinicola subsp. Homalodisca coagulata.